The sequence spans 462 residues: Elongation factor 1-alpha 1 (462 aa).

Position 2 is a n,N,N-trimethylglycine (Gly-2). Residues 5–242 enclose the tr-type G domain; it reads KTHINIVVIG…DCILPPTRPT (238 aa). The segment at 14-21 is G1; sequence GHVDSGKS. 14-21 provides a ligand contact to GTP; it reads GHVDSGKS. Residue Lys-36 is modified to N6,N6,N6-trimethyllysine; alternate. N6,N6-dimethyllysine; alternate is present on Lys-36. At Lys-36 the chain carries N6-methyllysine; alternate. Residue Lys-55 is modified to N6,N6-dimethyllysine. A G2 region spans residues 70-74; it reads GITID. Lys-79 is subject to N6,N6,N6-trimethyllysine; by EEF1AKMT1. The interval 91 to 94 is G3; that stretch reads DAPG. Residue 153–156 participates in GTP binding; that stretch reads NKMD. A G4 region spans residues 153 to 156; that stretch reads NKMD. An N6,N6,N6-trimethyllysine; alternate; by EEF1AKMT3 modification is found at Lys-165. Lys-165 bears the N6,N6-dimethyllysine; alternate; by EEF1AKMT3 mark. Lys-165 bears the N6-acetyllysine; alternate mark. Position 165 is an N6-methyllysine; alternate; by EEF1AKMT3 (Lys-165). Lys-172 is modified (N6-acetyllysine). 194-196 is a binding site for GTP; sequence SGW. The segment at 194–196 is G5; it reads SGW. Position 273 is an N6-acetyllysine (Lys-273). Ser-300 is subject to Phosphoserine; by TGFBR1. The residue at position 301 (Glu-301) is a 5-glutamyl glycerylphosphorylethanolamine. The residue at position 318 (Lys-318) is an N6,N6,N6-trimethyllysine; by EEF1AKMT2. A 5-glutamyl glycerylphosphorylethanolamine modification is found at Glu-374. A Glycyl lysine isopeptide (Lys-Gly) (interchain with G-Cter in ubiquitin) cross-link involves residue Lys-385. Lys-392 bears the N6-acetyllysine; alternate mark. The residue at position 392 (Lys-392) is an N6-succinyllysine; alternate. Phosphothreonine; by PASK is present on Thr-432. Lys-439 is modified (N6-acetyllysine).

This sequence belongs to the TRAFAC class translation factor GTPase superfamily. Classic translation factor GTPase family. EF-Tu/EF-1A subfamily. Found in a nuclear export complex with XPO5, EEF1A1, Ran and aminoacylated tRNA. Interacts with PARP1 and TXK. Interacts with KARS1. May interact with ERGIC2. Interacts with IFIT1 (via TPR repeats 4-7). Interacts with DLC1, facilitating distribution to the membrane periphery and ruffles upon growth factor stimulation. Interacts with ZPR1; the interaction occurs in a epidermal growth factor (EGF)-dependent manner. Interacts with PPP1R16B. Interacts with SPHK1 and SPHK2; both interactions increase SPHK1 and SPHK2 kinase activity. Interacts with guanyl-nucleotide exchange factor EEF1B2. Interacts (via middle-region) with HTATIP2 (via N-terminus); the interaction is direct and competes with EEF1A1 binding to guanyl-nucleotide exchange factor EEF1B2, thereby inhibiting GDP for GTP exchange and reactivation of EEF1A1. Interacts with tRNA. ISGylated. In terms of processing, phosphorylated by TXK. Phosphorylation by PASK increases translation efficiency. Phosphorylated by ROCK2. Phosphorylation by TGFBR1 inhibits translation elongation. Post-translationally, trimethylated at Lys-79 by EEF1AKMT1. Methylated at Lys-165 by EEF1AKMT3, methylation by EEF1AKMT3 is dynamic as well as inducible by stress conditions, such as ER-stress, and plays a regulatory role on mRNA translation. Trimethylated at Lys-318 by EEF1AKMT2. Mono-, di-, and trimethylated at Lys-36 by EEF1AKMT4; trimethylated form is predominant. Methylation by EEF1AKMT4 contributes to the fine-tuning of translation rates for a subset of tRNAs. Trimethylated at Gly-2 by METTL13. Mono- and dimethylated at Lys-55 by METTL13; dimethylated form is predominant. Ubiquitinated at Lys-385 by RNF14 in response to ribosome collisions (ribosome stalling), leading to its degradation by the proteasome and rescue of stalled ribosomes.

The protein localises to the cytoplasm. The protein resides in the nucleus. Its subcellular location is the nucleolus. It localises to the cell membrane. The catalysed reaction is GTP + H2O = GDP + phosphate + H(+). Translation elongation factor that catalyzes the GTP-dependent binding of aminoacyl-tRNA (aa-tRNA) to the A-site of ribosomes during the elongation phase of protein synthesis. Base pairing between the mRNA codon and the aa-tRNA anticodon promotes GTP hydrolysis, releasing the aa-tRNA from EEF1A1 and allowing its accommodation into the ribosome. The growing protein chain is subsequently transferred from the P-site peptidyl tRNA to the A-site aa-tRNA, extending it by one amino acid through ribosome-catalyzed peptide bond formation. Also plays a role in the positive regulation of IFNG transcription in T-helper 1 cells as part of an IFNG promoter-binding complex with TXK and PARP1. Also plays a role in cytoskeleton organization by promoting actin bundling. The chain is Elongation factor 1-alpha 1 (EEF1A1) from Equus caballus (Horse).